The primary structure comprises 274 residues: Thiamine kinase (274 aa).

This sequence belongs to the thiamine kinase family.

The catalysed reaction is thiamine + ATP = thiamine phosphate + ADP + H(+). The protein operates within cofactor biosynthesis; thiamine diphosphate biosynthesis; thiamine phosphate from thiamine: step 1/1. In terms of biological role, catalyzes the ATP-dependent phosphorylation of thiamine to thiamine phosphate. Is involved in thiamine salvage. The sequence is that of Thiamine kinase from Salmonella dublin (strain CT_02021853).